The chain runs to 112 residues: Mitochondrial import inner membrane translocase subunit TIM14-1 (112 aa).

Alanine 2 carries the post-translational modification N-acetylalanine. A helical membrane pass occupies residues 7–23 (AGVAVAATALAGRYGIQ). The 60-residue stretch at 53-112 (EAALILGVRESVAAEKVKEAHRKVMVANHPDAGGSHFLASKINEAKDVMLGKTKNSGSAF) folds into the J domain.

It belongs to the TIM14 family. In terms of assembly, probable component of the PAM complex at least composed of a mitochondrial HSP70 protein, TIMM44 and TIMM14. The complex interacts with the TIMM23 component of the TIM17:23 complex.

Its subcellular location is the mitochondrion. It is found in the mitochondrion inner membrane. Functionally, component of the PAM complex, a complex required for the translocation of transit peptide-containing proteins from the inner membrane into the mitochondrial matrix in an ATP-dependent manner. This chain is Mitochondrial import inner membrane translocase subunit TIM14-1 (TIM14-1), found in Arabidopsis thaliana (Mouse-ear cress).